We begin with the raw amino-acid sequence, 145 residues long: Ubiquitin-conjugating enzyme E2 variant 1C (145 aa).

One can recognise a UBC core domain in the interval Pro-12 to Phe-145.

Belongs to the ubiquitin-conjugating enzyme family. Heterodimer with UBC35 or UBC36. Expressed in roots, shoots, leaves, stems and flowers, but not in pollen.

Has no ubiquitin ligase activity on its own. The heterodimer with UBC catalyzes the synthesis of non-canonical poly-ubiquitin chains that are linked through 'Lys-63'. This type of poly-ubiquitination does not lead to protein degradation by the proteasome. Mediates transcriptional activation of target genes. May play a role in the control of progress through the cell cycle and differentiation. May play a role in the error-free DNA repair pathway and contributes to the survival of cells after DNA damage. The polypeptide is Ubiquitin-conjugating enzyme E2 variant 1C (UEV1C) (Arabidopsis thaliana (Mouse-ear cress)).